A 154-amino-acid chain; its full sequence is Jupiter microtubule associated homolog 1 (154 aa).

At M1 the chain carries N-acetylmethionine. Positions 1–19 are enriched in polar residues; the sequence is MTTTTTFKGVDPNSRNSSR. The disordered stretch occupies residues 1–154; that stretch reads MTTTTTFKGV…PGGKSSLVLG (154 aa). T2 carries the post-translational modification N-acetylthreonine; in Hematological and neurological expressed 1 protein, N-terminally processed. S28 and S31 each carry phosphoserine. T54 is subject to Phosphothreonine. 4 positions are modified to phosphoserine: S71, S87, S88, and S92. A compositionally biased stretch (polar residues) spans 79 to 91; it reads SPGTQRSNSSEAS. A compositionally biased stretch (basic and acidic residues) spans 96-108; it reads LDLKGEGDMHENV. Pro residues predominate over residues 125–138; sequence PAAPVPSPVAPAPV. S131 carries the post-translational modification Phosphoserine. An N6-acetyllysine modification is found at K148.

This sequence belongs to the JUPITER family. As to quaternary structure, interacts with the complex composed, at least, of APC, CTNNB1 and GSK3B; the interaction takes place with the inactive form of GSK3B (phosphorylated at 'Ser-9'). Expressed in yolk sac, fetal brain, brain, spleen and bone marrow.

The protein resides in the nucleus. It is found in the cytoplasm. Modulates negatively AKT-mediated GSK3B signaling. Induces CTNNB1 'Ser-33' phosphorylation and degradation through the suppression of the inhibitory 'Ser-9' phosphorylation of GSK3B, which represses the function of the APC:CTNNB1:GSK3B complex and the interaction with CDH1/E-cadherin in adherent junctions. Plays a role in the regulation of cell cycle and cell adhesion. Has an inhibitory role on AR-signaling pathway through the induction of receptor proteasomal degradation. The polypeptide is Jupiter microtubule associated homolog 1 (Mus musculus (Mouse)).